We begin with the raw amino-acid sequence, 228 residues long: Auxin-responsive protein IAA14 (228 aa).

An EAR-like (transcriptional repression) motif is present at residues 8–12; it reads LCLGL. Positions 110–210 constitute a PB1 domain; sequence VAFVKVSMDG…SCKRLRIMKG (101 aa).

The protein belongs to the Aux/IAA family. Homodimers and heterodimers. Interacts with TPL. As to expression, preferentially expressed in roots and flowers.

The protein resides in the nucleus. Aux/IAA proteins are short-lived transcriptional factors that function as repressors of early auxin response genes at low auxin concentrations. Repression is thought to result from the interaction with auxin response factors (ARFs), proteins that bind to the auxin-responsive promoter element (AuxRE). Formation of heterodimers with ARF proteins may alter their ability to modulate early auxin response genes expression. The polypeptide is Auxin-responsive protein IAA14 (IAA14) (Arabidopsis thaliana (Mouse-ear cress)).